The chain runs to 215 residues: Endonuclease III (215 aa).

The HhH domain occupies 113 to 132 (REDLESLPGVGRKTANVILN). Positions 192, 199, 202, and 208 each coordinate [4Fe-4S] cluster.

Belongs to the Nth/MutY family. The cofactor is [4Fe-4S] cluster.

The enzyme catalyses 2'-deoxyribonucleotide-(2'-deoxyribose 5'-phosphate)-2'-deoxyribonucleotide-DNA = a 3'-end 2'-deoxyribonucleotide-(2,3-dehydro-2,3-deoxyribose 5'-phosphate)-DNA + a 5'-end 5'-phospho-2'-deoxyribonucleoside-DNA + H(+). In terms of biological role, DNA repair enzyme that has both DNA N-glycosylase activity and AP-lyase activity. The DNA N-glycosylase activity releases various damaged pyrimidines from DNA by cleaving the N-glycosidic bond, leaving an AP (apurinic/apyrimidinic) site. The AP-lyase activity cleaves the phosphodiester bond 3' to the AP site by a beta-elimination, leaving a 3'-terminal unsaturated sugar and a product with a terminal 5'-phosphate. The protein is Endonuclease III of Buchnera aphidicola subsp. Baizongia pistaciae (strain Bp).